The primary structure comprises 182 residues: NADH-dependent FAD reductase (182 aa).

An NAD(+)-binding site is contributed by Asp16. Residues 47-48 (NS), 62-64 (CVG), and His98 each bind FAD. His143 is a binding site for NAD(+).

This sequence belongs to the non-flavoprotein flavin reductase family. Homodimer.

It carries out the reaction FADH2 + NAD(+) = FAD + NADH + 2 H(+). The protein operates within antibiotic biosynthesis. The SgcE6-SgcC hydroxylation activity decreases in the presence of excess FAD. Reductase component of a two-component system involved in the biosynthesis of the enediyne antitumor antibiotic C-1027. SgcE6 provides the FADH(2) required by both the halogenase SgcC3 and the monooxygenase SgcC through free diffusion. Accepts only NADH and FAD as substrates. This chain is NADH-dependent FAD reductase, found in Streptomyces globisporus.